We begin with the raw amino-acid sequence, 331 residues long: tRNA N6-adenosine threonylcarbamoyltransferase (331 aa).

Residues H109, H113, and Y130 each contribute to the Fe cation site. Substrate contacts are provided by residues 130 to 134, D162, D183, and S262; that span reads YLSGG. D290 contacts Fe cation.

It belongs to the KAE1 / TsaD family. Requires Fe(2+) as cofactor.

The protein resides in the cytoplasm. The catalysed reaction is L-threonylcarbamoyladenylate + adenosine(37) in tRNA = N(6)-L-threonylcarbamoyladenosine(37) in tRNA + AMP + H(+). Required for the formation of a threonylcarbamoyl group on adenosine at position 37 (t(6)A37) in tRNAs that read codons beginning with adenine. Is probably involved in the transfer of the threonylcarbamoyl moiety of threonylcarbamoyl-AMP (TC-AMP) to the N6 group of A37. The polypeptide is tRNA N6-adenosine threonylcarbamoyltransferase (Metallosphaera sedula (strain ATCC 51363 / DSM 5348 / JCM 9185 / NBRC 15509 / TH2)).